Consider the following 493-residue polypeptide: 6-aminohexanoate-cyclic-dimer hydrolase (493 aa).

Catalysis depends on charge relay system residues lysine 72 and serine 150. The active-site Acyl-ester intermediate is the serine 174.

The protein belongs to the amidase family. As to quaternary structure, homodimer.

The catalysed reaction is 1,8-diazacyclotetradecane-2,9-dione + H2O = N-(6-aminohexanoyl)-6-aminohexanoate. Its pathway is xenobiotic degradation; nylon-6 oligomer degradation. Catalyzes the hydrolysis of 6-aminohexanoic acid cyclic dimer (1,8-diazacyclotetradecane-2,9-dione) to form the linear dimer 6-aminohexanoyl-6-aminohexanoic acid. The polypeptide is 6-aminohexanoate-cyclic-dimer hydrolase (nylA) (Pseudomonas sp. (strain NK87)).